Reading from the N-terminus, the 109-residue chain is Iron-sulfur assembly protein IscA-like 3, mitochondrial (109 aa).

A mitochondrion-targeting transit peptide spans 1–18 (MRKQVLALSDTAAARIRQ). Cys37, Cys100, and Cys102 together coordinate Fe cation.

Belongs to the HesB/IscA family. As to quaternary structure, homodimer; may form tetramers and higher multimers. Requires Fe cation as cofactor.

It is found in the mitochondrion. Its function is as follows. Involved in the assembly of mitochondrial iron-sulfur proteins. Probably involved in the binding of an intermediate of Fe/S cluster assembly. The protein is Iron-sulfur assembly protein IscA-like 3, mitochondrial of Arabidopsis thaliana (Mouse-ear cress).